The chain runs to 247 residues: Serine/threonine-protein phosphatase 2A activator (247 aa).

It belongs to the PTPA-type PPIase family.

It localises to the cytoplasm. The catalysed reaction is [protein]-peptidylproline (omega=180) = [protein]-peptidylproline (omega=0). In terms of biological role, PPIases accelerate the folding of proteins. It catalyzes the cis-trans isomerization of proline imidic peptide bonds in oligopeptides. Acts as a regulatory subunit for PP2A-like phosphatases modulating their activity or substrate specificity, probably by inducing a conformational change in the catalytic subunit, a direct target of the PPIase. Can reactivate inactive phosphatase PP2A-phosphatase methylesterase complexes (PP2Ai) in presence of ATP and Mg(2+) by dissociating the inactive form from the complex. This is Serine/threonine-protein phosphatase 2A activator from Encephalitozoon cuniculi (strain GB-M1) (Microsporidian parasite).